Consider the following 557-residue polypeptide: uncharacterized protein (557 aa).

The DhaL domain occupies 7–206 (SSFIDMLRLG…FACFLEGMLS (200 aa)).

This is an uncharacterized protein from Mycoplasma genitalium (strain ATCC 33530 / DSM 19775 / NCTC 10195 / G37) (Mycoplasmoides genitalium).